The sequence spans 59 residues: UPF0391 membrane protein AZC_4184 (59 aa).

2 helical membrane passes run 4 to 24 (WALT…TAVA) and 30 to 50 (IAKI…VMGF).

This sequence belongs to the UPF0391 family.

It is found in the cell membrane. This chain is UPF0391 membrane protein AZC_4184, found in Azorhizobium caulinodans (strain ATCC 43989 / DSM 5975 / JCM 20966 / LMG 6465 / NBRC 14845 / NCIMB 13405 / ORS 571).